The following is a 244-amino-acid chain: Lymphotoxin-beta (244 aa).

Topologically, residues 1 to 18 are cytoplasmic; that stretch reads MGALGLEGRGGRLQGRGS. The chain crosses the membrane as a helical; Signal-anchor for type II membrane protein span at residues 19–48; that stretch reads LLLAVAGATSLVTLLLAVPITVLAVLALVP. The Extracellular portion of the chain corresponds to 49-244; that stretch reads QDQGGLVTET…KTFFGAVMVG (196 aa). A THD domain is found at 88 to 243; sequence PAAHLIGAPL…GKTFFGAVMV (156 aa). Asn-222 carries N-linked (GlcNAc...) asparagine glycosylation.

The protein belongs to the tumor necrosis factor family. In terms of assembly, heterotrimer of either two LTB and one LTA subunits or (less prevalent) one LTB and two LTA subunits. As to expression, spleen and thymus.

Its subcellular location is the membrane. Cytokine that binds to LTBR/TNFRSF3. May play a specific role in immune response regulation. Provides the membrane anchor for the attachment of the heterotrimeric complex to the cell surface. Isoform 2 is probably non-functional. The protein is Lymphotoxin-beta (LTB) of Homo sapiens (Human).